The following is a 622-amino-acid chain: Probable potassium transport system protein Kup 1 (622 aa).

Helical transmembrane passes span 7-27 (LLVL…TSPL), 50-70 (LISL…VLFL), 96-116 (TAIL…DAMI), 132-152 (VTPA…LLLF), 165-185 (FFGP…FVHI), 210-230 (VGIV…ALYA), 244-264 (WFTV…AFVL), 282-302 (ALLP…QAVI), 334-354 (IYLP…VFLF), 360-380 (LATA…VLSF), 391-411 (TWWA…FLGA), and 416-436 (IHDG…IMWT).

It belongs to the HAK/KUP transporter (TC 2.A.72) family.

It localises to the cell inner membrane. It catalyses the reaction K(+)(in) + H(+)(in) = K(+)(out) + H(+)(out). Functionally, transport of potassium into the cell. Likely operates as a K(+):H(+) symporter. This is Probable potassium transport system protein Kup 1 from Rhizobium meliloti (strain 1021) (Ensifer meliloti).